The primary structure comprises 287 residues: Co-chaperone protein DjlA (287 aa).

Residues Met-1–Lys-6 lie on the Periplasmic side of the membrane. A helical transmembrane segment spans residues Ile-7 to His-30. Residues Gln-31–Lys-287 lie on the Cytoplasmic side of the membrane. A disordered region spans residues Gly-192–Ala-213. The 67-residue stretch at Asp-221–Lys-287 folds into the J domain.

In terms of assembly, homodimer.

Its subcellular location is the cell inner membrane. Functionally, regulatory DnaK co-chaperone. Direct interaction between DnaK and DjlA is needed for the induction of the wcaABCDE operon, involved in the synthesis of a colanic acid polysaccharide capsule, possibly through activation of the RcsB/RcsC phosphotransfer signaling pathway. The colanic acid capsule may help the bacterium survive conditions outside the host. This Vibrio vulnificus (strain YJ016) protein is Co-chaperone protein DjlA.